A 362-amino-acid chain; its full sequence is MEHNGSASNAGKIHQNRLSSVTEDEDQDAALTIVTVLDRVATVVDSVQASQKRIEERHREMGNAIKSVQIDLLKLSQSHSNTGYVVNKLFEKTRKVSAHIKDVKARVEKQQVRVTKVETKQEEIMKKNKFRVVIFQEDVPCPASLSVVKDRSLPENEEEAEEVFDPPIDLSSDEEYYVEESRSARLRKSGKEHIDHIKKAFSKENMQKTRQNFDKKVSGIRTRIVTPERRERLRQSGERLRQSGERLRQSGERFKKSISNATPSKEAFKIRSLRKPKDPKAEGQEVDRGMGVDIISGSLALGPIHEFHSDGFSETEKEVTKVGYIPQEGGDPPTPEPLKVTFKPQVRVEDDESLLLELKQSS.

A disordered region spans residues 1–24; the sequence is MEHNGSASNAGKIHQNRLSSVTED. A coiled-coil region spans residues 100–120; sequence IKDVKARVEKQQVRVTKVETK. Residues serine 152, serine 171, and serine 172 each carry the phosphoserine modification. The segment covering 227-255 has biased composition (basic and acidic residues); the sequence is PERRERLRQSGERLRQSGERLRQSGERFK. Positions 227 to 261 are disordered; sequence PERRERLRQSGERLRQSGERLRQSGERFKKSISNA. The residue at position 324 (tyrosine 324) is a Phosphotyrosine. The residue at position 334 (threonine 334) is a Phosphothreonine. Serine 353 carries the post-translational modification Phosphoserine.

It belongs to the CAVIN family. Component of the CAVIN complex composed of CAVIN1, CAVIN2, CAVIN3 and CAVIN4. Interacts with CAVIN1, CAV3, ADRA1A and ADRA1B. Interacts with CAVIN2; this augments the transactivation of NPPA. Interacts with MAPK1 and MAPK3. Expressed at much higher levels in cardiomyocytes than in non-cardiomyocytes.

The protein localises to the cytoplasm. It is found in the myofibril. It localises to the sarcomere. The protein resides in the cytosol. Its subcellular location is the cell membrane. The protein localises to the sarcolemma. It is found in the membrane. It localises to the caveola. Functionally, modulates the morphology of formed caveolae in cardiomyocytes, but is not required for caveolar formation. Facilitates the recruitment of MAPK1/3 to caveolae within cardiomyocytes and regulates alpha-1 adrenergic receptor-induced hypertrophic responses in cardiomyocytes through MAPK1/3 activation. Contributes to proper membrane localization and stabilization of caveolin-3 (CAV3) in cardiomyocytes. Induces RHOA activation and activates NPPA transcription and myofibrillar organization through the Rho/ROCK signaling pathway. The sequence is that of Caveolae-associated protein 4 from Rattus norvegicus (Rat).